We begin with the raw amino-acid sequence, 399 residues long: Dual specificity mitogen-activated protein kinase kinase 4 (399 aa).

Residues 1 to 40 (MAAPSPSGGGGSGGGSGSGTPGPVGSPAPGHPAVSSMQGK) are disordered. An N-acetylalanine modification is found at alanine 2. Positions 7–22 (SGGGGSGGGSGSGTPG) are enriched in gly residues. Positions 37 to 52 (MQGKRKALKLNFANPP) are d domain. Residue arginine 58 is modified to Asymmetric dimethylarginine; alternate. Arginine 58 carries the omega-N-methylarginine; alternate modification. Serine 90 is modified (phosphoserine). A Protein kinase domain is found at 102 to 367 (LKDLGEIGRG…YKELLKHPFI (266 aa)). ATP is bound by residues 108-116 (IGRGAYGSV) and lysine 131. The active-site Proton acceptor is aspartate 229. Serine 257 carries the phosphoserine; by MAP3K modification. A Phosphothreonine; by MAP3K modification is found at threonine 261. Positions 364–387 (HPFILMYEERAVEVACYVCKILDQ) are DVD domain.

The protein belongs to the protein kinase superfamily. STE Ser/Thr protein kinase family. MAP kinase kinase subfamily. As to quaternary structure, interacts with SPAG9. Interacts (via its D domain) with its substrates MAPK8/JNK1, MAPK9/JNK2, MAPK10/JNK3, MAPK11 and MAPK14. Interacts (via its DVD domain) with MAP3Ks activators like MAP3K1/MEKK1 and MAP3K11/MLK3. Interacts with ARRB1, ARRB2 and MAPK8IP3/JIP3. Post-translationally, activated by phosphorylation on Ser-257 and Thr-261 by MAP kinase kinase kinases (MAP3Ks). Abundant expression is seen in the skeletal muscle. It is also widely expressed in other tissues.

The protein localises to the cytoplasm. It is found in the nucleus. The catalysed reaction is L-seryl-[protein] + ATP = O-phospho-L-seryl-[protein] + ADP + H(+). The enzyme catalyses L-threonyl-[protein] + ATP = O-phospho-L-threonyl-[protein] + ADP + H(+). It carries out the reaction L-tyrosyl-[protein] + ATP = O-phospho-L-tyrosyl-[protein] + ADP + H(+). Its activity is regulated as follows. Activated in response to a variety of cellular stresses, including UV and gamma-irradiation, heat shock, hyperosmolarity, T-cell receptor stimulation, peroxide and inflammatory cytokines. Also activated by developmental cues. MAP2K4/MKK4 is activated by the majority of MKKKs, such as MAP3K5/ASK1, MAP3K1/MEKK1, MAP3K7/TAK1, MAP3K10/MLK2, MAP3K11/MLK3, MAP3K12/DLK and MAP3K13/LZK. In terms of biological role, dual specificity protein kinase which acts as an essential component of the MAP kinase signal transduction pathway. Essential component of the stress-activated protein kinase/c-Jun N-terminal kinase (SAP/JNK) signaling pathway. With MAP2K7/MKK7, is the one of the only known kinase to directly activate the stress-activated protein kinase/c-Jun N-terminal kinases MAPK8/JNK1, MAPK9/JNK2 and MAPK10/JNK3. MAP2K4/MKK4 and MAP2K7/MKK7 both activate the JNKs by phosphorylation, but they differ in their preference for the phosphorylation site in the Thr-Pro-Tyr motif. MAP2K4 shows preference for phosphorylation of the Tyr residue and MAP2K7/MKK7 for the Thr residue. The phosphorylation of the Thr residue by MAP2K7/MKK7 seems to be the prerequisite for JNK activation at least in response to pro-inflammatory cytokines, while other stimuli activate both MAP2K4/MKK4 and MAP2K7/MKK7 which synergistically phosphorylate JNKs. MAP2K4 is required for maintaining peripheral lymphoid homeostasis. The MKK/JNK signaling pathway is also involved in mitochondrial death signaling pathway, including the release cytochrome c, leading to apoptosis. Whereas MAP2K7/MKK7 exclusively activates JNKs, MAP2K4/MKK4 additionally activates the p38 MAPKs MAPK11, MAPK12, MAPK13 and MAPK14. The polypeptide is Dual specificity mitogen-activated protein kinase kinase 4 (MAP2K4) (Homo sapiens (Human)).